We begin with the raw amino-acid sequence, 172 residues long: Large ribosomal subunit protein uL10 (172 aa).

This sequence belongs to the universal ribosomal protein uL10 family. In terms of assembly, part of the ribosomal stalk of the 50S ribosomal subunit. The N-terminus interacts with L11 and the large rRNA to form the base of the stalk. The C-terminus forms an elongated spine to which L12 dimers bind in a sequential fashion forming a multimeric L10(L12)X complex.

Functionally, forms part of the ribosomal stalk, playing a central role in the interaction of the ribosome with GTP-bound translation factors. This is Large ribosomal subunit protein uL10 from Rhizobium meliloti (strain 1021) (Ensifer meliloti).